The sequence spans 436 residues: MPDRAQVIIRIVPGGGTKTLQQIINQLEYLSRKGKLELQRSARHLDIPLPPDQIHELARSWVQETGTYDESQPDEERQQELTTHIIVSFPAGTSQAAAYAASREWAAEMFGSGAGGGSYNYLTAFHIDRDHPHLHVVVNRRELLGHGWLKISRRHPQLNYDALRINMAEISLRHGIVLDASSRAERGIFERPITYAQFRRLERQARQIRFEDADLEQSSSQGDHPEFSQSPDTAPFEASAGRSEGMPYPNNRQNGSQVHLHEPAGFSNRAGGSVRIALETQRLAIFADDIESGSPPVSDVRAGNANADSDLPRSTVARTTDYSQRWSKRPRDDDEGPSGAKRVRLEGMAVGPEANAGERDSRGDPVAPPAETSRPSSLQDMARPNTATDPLAASGHLEQRRGTLSKRPRVEDDGEPSERKRARDDRSQDGRGGNRR.

Disordered regions lie at residues 213–266 and 290–436; these read ADLE…PAGF and IESG…GNRR. Composition is skewed to polar residues over residues 216-232 and 316-325; these read EQSS…QSPD and VARTTDYSQR. Positions 408–429 are enriched in basic and acidic residues; sequence PRVEDDGEPSERKRARDDRSQD.

Functionally, tumor formation by A.tumefaciens involves the transfer and integration of a defined segment (T-DNA) of Ti plasmid DNA into the plant nuclear genome. The virD operon encodes a site-specific endonuclease that cleaves at a unique site within both 24 bp direct repeats flanking the T-DNA. This is T-DNA border endonuclease VirD2 (virD2) from Rhizobium rhizogenes (Agrobacterium rhizogenes).